Here is a 210-residue protein sequence, read N- to C-terminus: MADS-box protein AGL42 (210 aa).

The region spanning 1-61 is the MADS-box domain; that stretch reads MVRGKIEMKK…GRLYEFSSSD (61 aa). In terms of domain architecture, K-box spans 87–177; it reads LQQLKQEASH…HQKNVINPWR (91 aa).

As to expression, expressed in quiescent center (QC) cells of root tips. Expressed at the base of the petiole of cotyledons and leaves, in flower buds, petals, sepals and abscission zone of flowers and siliques.

It localises to the nucleus. Functionally, MADS-box transcription factor that acts with AGL71 and AGL72 in the control of flowering time. Promotes flowering at the shoot apical and axillary meristems. Seems to act through a gibberellin-dependent pathway. Interacts genetically with SOC1 and its expression is directly regulated by SOC1. Plays a role in controlling flower organ senescence and abscission by repressing ethylene responses and regulating the expression of BOP2 and IDA. In Arabidopsis thaliana (Mouse-ear cress), this protein is MADS-box protein AGL42 (AGL42).